The sequence spans 299 residues: ATP synthase gamma chain (299 aa).

It belongs to the ATPase gamma chain family. F-type ATPases have 2 components, CF(1) - the catalytic core - and CF(0) - the membrane proton channel. CF(1) has five subunits: alpha(3), beta(3), gamma(1), delta(1), epsilon(1). CF(0) has three main subunits: a, b and c.

Its subcellular location is the cell membrane. Its function is as follows. Produces ATP from ADP in the presence of a proton gradient across the membrane. The gamma chain is believed to be important in regulating ATPase activity and the flow of protons through the CF(0) complex. This is ATP synthase gamma chain from Levilactobacillus brevis (strain ATCC 367 / BCRC 12310 / CIP 105137 / JCM 1170 / LMG 11437 / NCIMB 947 / NCTC 947) (Lactobacillus brevis).